We begin with the raw amino-acid sequence, 271 residues long: 3-methyl-2-oxobutanoate hydroxymethyltransferase 1 (271 aa).

Asp53 and Asp92 together coordinate Mg(2+). 3-methyl-2-oxobutanoate-binding positions include 53-54, Asp92, and Lys120; that span reads DS. Glu122 provides a ligand contact to Mg(2+). Glu189 acts as the Proton acceptor in catalysis.

Belongs to the PanB family. As to quaternary structure, homodecamer; pentamer of dimers. Mg(2+) is required as a cofactor.

It is found in the cytoplasm. The enzyme catalyses 3-methyl-2-oxobutanoate + (6R)-5,10-methylene-5,6,7,8-tetrahydrofolate + H2O = 2-dehydropantoate + (6S)-5,6,7,8-tetrahydrofolate. It functions in the pathway cofactor biosynthesis; (R)-pantothenate biosynthesis; (R)-pantoate from 3-methyl-2-oxobutanoate: step 1/2. Functionally, catalyzes the reversible reaction in which hydroxymethyl group from 5,10-methylenetetrahydrofolate is transferred onto alpha-ketoisovalerate to form ketopantoate. This chain is 3-methyl-2-oxobutanoate hydroxymethyltransferase 1, found in Burkholderia cenocepacia (strain HI2424).